Here is a 127-residue protein sequence, read N- to C-terminus: Large ribosomal subunit protein eL8 (127 aa).

This sequence belongs to the eukaryotic ribosomal protein eL8 family. In terms of assembly, part of the 50S ribosomal subunit. Component of box C/D small ribonucleoprotein (sRNP) particles that contain rpl7ae, FlpA and nop5, plus a guide RNA. These sRNP particles form homodimers, giving rise to an asymmetric holoenzyme. Probably part of the RNase P complex.

It localises to the cytoplasm. Multifunctional RNA-binding protein that recognizes the K-turn motif in ribosomal RNA, the RNA component of RNase P, box H/ACA, box C/D and box C'/D' sRNAs. This is Large ribosomal subunit protein eL8 from Saccharolobus solfataricus (strain ATCC 35092 / DSM 1617 / JCM 11322 / P2) (Sulfolobus solfataricus).